The sequence spans 643 residues: Inner kinetochore subunit cnp3 (643 aa).

Disordered stretches follow at residues 55 to 209 (SIHL…AFPD) and 224 to 386 (SIKD…QSDS). Low complexity-rich tracts occupy residues 85–97 (AASDEASHASSSD) and 104–125 (DIPSSPLLMNSRALRASRGSSG). Residues 166–185 (DFSRIKASPDRKKFEPRRST) show a composition bias toward basic and acidic residues. Polar residues-rich tracts occupy residues 235-261 (YIQTISKPRRSYVQNNKSEQTIKPSKQ), 295-304 (LNRSLANNSQ), and 313-322 (KPLQESSINS). Composition is skewed to basic residues over residues 332-341 (VKRKRGRPRK) and 360-370 (GAKKPAIRNAK). The a.T hook DNA-binding region spans 333–345 (KRKRGRPRKNKLE).

This sequence belongs to the CENP-C/MIF2 family. In terms of assembly, component of the inner kinetochore constitutive centromere-associated network (CCAN) (also known as central kinetochore Sim4 complex in fission yeast), which is composed of at least cnl2, cnp3, cnp20, fta1, fta2, fta3, fta4, fta6, fta7, mal2, mhf1, mhf2, mis6, mis15, mis17, sim4 and wip1.

The protein resides in the nucleus. Its subcellular location is the nucleoplasm. Functionally, component of the kinetochore, a multiprotein complex that assembles on centromeric DNA and attaches chromosomes to spindle microtubules, mediating chromosome segregation and sister chromatid segregation during meiosis and mitosis. Component of the inner kinetochore constitutive centromere-associated network (CCAN), which serves as a structural platform for outer kinetochore assembly. This Schizosaccharomyces pombe (strain 972 / ATCC 24843) (Fission yeast) protein is Inner kinetochore subunit cnp3 (cnp3).